A 223-amino-acid polypeptide reads, in one-letter code: Urease accessory protein UreF (223 aa).

Belongs to the UreF family. As to quaternary structure, ureD, UreF and UreG form a complex that acts as a GTP-hydrolysis-dependent molecular chaperone, activating the urease apoprotein by helping to assemble the nickel containing metallocenter of UreC. The UreE protein probably delivers the nickel.

The protein localises to the cytoplasm. Functionally, required for maturation of urease via the functional incorporation of the urease nickel metallocenter. The sequence is that of Urease accessory protein UreF from Pseudomonas aeruginosa (strain LESB58).